The sequence spans 268 residues: Interleukin-1 alpha (268 aa).

Residues 1–112 (MAKVPDLFED…NTEEEIIKPR (112 aa)) constitute a propeptide that is removed on maturation. K82 is modified (N6-acetyllysine). Positions 82–86 (KKRRL) are nuclear localization signal (NLS). At S87 the chain carries Phosphoserine. Residues N102 and N141 are each glycosylated (N-linked (GlcNAc...) asparagine).

It belongs to the IL-1 family. Monomer. Interacts with TMED10; the interaction mediates the translocation from the cytoplasm into the ERGIC (endoplasmic reticulum-Golgi intermediate compartment) and thereby secretion. Interacts with IL1R1. Interacts with S100A13; this interaction is the first step in the export of IL1A, followed by direct translocation of this complex across the plasma membrane. In terms of processing, acetylated within its nuclear localization sequence, which impacts subcellular localization. Post-translationally, proteolytic processed by CAPN1 in a calcium-dependent manner. Cleavage from 31 kDa precursor to 18 kDa biologically active molecules. Phosphorylated. Phosphorylation greatly enhances susceptibility to digestion and promotes the conversion of pre-IL1A alpha to the biologically active IL1A.

It localises to the nucleus. The protein resides in the cytoplasm. Its subcellular location is the secreted. Functionally, cytokine constitutively present intracellularly in nearly all resting non-hematopoietic cells that plays an important role in inflammation and bridges the innate and adaptive immune systems. After binding to its receptor IL1R1 together with its accessory protein IL1RAP, forms the high affinity interleukin-1 receptor complex. Signaling involves the recruitment of adapter molecules such as MYD88, IRAK1 or IRAK4. In turn, mediates the activation of NF-kappa-B and the three MAPK pathways p38, p42/p44 and JNK pathways. Within the cell, acts as an alarmin and cell death results in its liberation in the extracellular space after disruption of the cell membrane to induce inflammation and alert the host to injury or damage. In addition to its role as a danger signal, which occurs when the cytokine is passively released by cell necrosis, directly senses DNA damage and acts as signal for genotoxic stress without loss of cell integrity. This chain is Interleukin-1 alpha (IL1A), found in Bubalus carabanensis (Swamp type water buffalo).